Here is a 174-residue protein sequence, read N- to C-terminus: Calcium-binding protein F (174 aa).

4 consecutive EF-hand domains span residues 9-44, 60-83, 92-127, and 133-162; these read KIFQ…KMDG, VDMD…EAKK, AALA…NGHT, and DQVL…RRID. Residues D22, N24, D26, S28, and D33 each contribute to the Ca(2+) site. 10 residues coordinate Ca(2+): D105, D107, D109, K111, E116, D140, D142, D144, C146, and E151.

The protein is Calcium-binding protein F (cbpF) of Dictyostelium discoideum (Social amoeba).